The following is a 152-amino-acid chain: Chemokine-like factor (152 aa).

The 121-residue stretch at 13–133 (FCCTLKCFVK…DCALMCQKLR (121 aa)) folds into the MARVEL domain. The next 4 helical transmembrane spans lie at 19–39 (CFVKFLRLVVTVTSMIFFIVG), 46–66 (IVITGFEVTVIFCFLVLYTCG), 81–101 (VINSMVTALCMLIVSVLALIP), and 108–128 (ILGGVFGFLTVTCTIADCALM).

The protein belongs to the chemokine-like factor family. As to expression, ubiquitous.

Its subcellular location is the membrane. Its function is as follows. May play an important role in inflammation and regeneration of skeletal muscle. Essential for embryonic development. In Mus musculus (Mouse), this protein is Chemokine-like factor (Cklf).